The sequence spans 119 residues: Beta-2-microglobulin (119 aa).

Residues 1–20 (MARSVAVVFLMLLSVVCLDA) form the signal peptide. The Ig-like C1-type domain maps to 25-114 (PQVQVYTRHP…TTLKEPKVVT (90 aa)). Cys45 and Cys100 form a disulfide bridge.

This sequence belongs to the beta-2-microglobulin family. Heterodimer of an alpha chain and a beta chain. Beta-2-microglobulin is the beta-chain of major histocompatibility complex class I molecules.

It localises to the secreted. Component of the class I major histocompatibility complex (MHC). Involved in the presentation of peptide antigens to the immune system. In Cricetulus griseus (Chinese hamster), this protein is Beta-2-microglobulin (B2M).